A 765-amino-acid chain; its full sequence is Protein transport protein Sec23A (765 aa).

Zn(2+) is bound by residues C61, C66, C85, and C88. Residues 632 to 718 (PEPVLLDSSS…EHGGSQARFL (87 aa)) form a Gelsolin-like repeat.

It belongs to the SEC23/SEC24 family. SEC23 subfamily. As to quaternary structure, COPII is composed of at least five proteins: the Sec23/24 complex, the Sec13/31 complex and Sar1.

The protein resides in the cytoplasmic vesicle. The protein localises to the COPII-coated vesicle membrane. It localises to the endoplasmic reticulum membrane. It is found in the cytoplasm. Its subcellular location is the cytosol. In terms of biological role, component of the coat protein complex II (COPII) which promotes the formation of transport vesicles from the endoplasmic reticulum (ER). The coat has two main functions, the physical deformation of the endoplasmic reticulum membrane into vesicles and the selection of cargo molecules for their transport to the Golgi complex. In Danio rerio (Zebrafish), this protein is Protein transport protein Sec23A.